Reading from the N-terminus, the 573-residue chain is MAKVELKAPDGPPSDVERIKQESRYLRGTLAETMEDPLSAGIPDDDNRLMKFHGSYLQDDRDVRTERQKQKLEPTYQFMIRVRTPGGVATPEQWLVMDELARKYANGTLKLTTRQAFQLHGVLKWNVKKTMQAINGALMTTLAACGDVNRNVMCNPNPYQSEVHAEVYEWAKLISDHLLPRTRAYYEIWLDDEKVAGTPPVDGEEEPIYGPTYLPRKFKIGIAVPPSNDVDVFSQDIGFIAIVEDGKLAGFNVAIGGGMGMTHGDKTTYPQLAKVIGFCKPDQVVEVAEKIMTVQRDYGNRSSRKHARFKYTIDRLGLEAVKEEIERRLGWRLGEARPYHFEHSGDRYGWVEGVNGTWHFTLFVEGGRVKDYDDYKLMTGLREIAKVHTGDFRLTPNQNLIIANVTSEKKPEIEALIAKYGLTDGRRYTALRRNALACVALPTCGLAMAEAERYLPKLLDKIEEIIDENGLRDEEITIRMTGCPNGCARHVLAEIAFVGKAVGKYNMYLGAAFNGTRLGKLYRENIGEEEILRELRMLLSRYAKERLDGEHFGDFVIRAGIVKEVTDGTNFHD.

Residues 1–20 (MAKVELKAPDGPPSDVERIK) form a disordered region. Residues C438, C444, C483, and C487 each contribute to the [4Fe-4S] cluster site. C487 is a binding site for siroheme.

Belongs to the nitrite and sulfite reductase 4Fe-4S domain family. Alpha(8)-beta(8). The alpha component is a flavoprotein, the beta component is a hemoprotein. Siroheme is required as a cofactor. Requires [4Fe-4S] cluster as cofactor.

It catalyses the reaction hydrogen sulfide + 3 NADP(+) + 3 H2O = sulfite + 3 NADPH + 4 H(+). The protein operates within sulfur metabolism; hydrogen sulfide biosynthesis; hydrogen sulfide from sulfite (NADPH route): step 1/1. Its function is as follows. Component of the sulfite reductase complex that catalyzes the 6-electron reduction of sulfite to sulfide. This is one of several activities required for the biosynthesis of L-cysteine from sulfate. The sequence is that of Sulfite reductase [NADPH] hemoprotein beta-component from Geobacillus kaustophilus (strain HTA426).